Reading from the N-terminus, the 820-residue chain is Nuclear pore complex protein Nup93 (820 aa).

It belongs to the nucleoporin interacting component (NIC) family.

It is found in the nucleus membrane. The protein localises to the nucleus. It localises to the nuclear pore complex. Functionally, plays a role in the nuclear pore complex (NPC) assembly and/or maintenance. This chain is Nuclear pore complex protein Nup93 (nup93), found in Xenopus laevis (African clawed frog).